A 538-amino-acid polypeptide reads, in one-letter code: Putative cysteine ligase BshC (538 aa).

Residues 460-484 (KINEQIELLERMLKRNVEKKHEVEL) are a coiled coil.

This sequence belongs to the BshC family.

Its function is as follows. Involved in bacillithiol (BSH) biosynthesis. May catalyze the last step of the pathway, the addition of cysteine to glucosamine malate (GlcN-Mal) to generate BSH. This chain is Putative cysteine ligase BshC, found in Bacillus cereus (strain AH820).